The following is a 113-amino-acid chain: Con-Ins G3b (113 aa).

A signal peptide spans 1 to 21 (MTTSFYFLLVALGLLLYVCQS). Residues 22 to 29 (SFGNQHTR) constitute a propeptide that is removed on maturation. Pro-34 carries the 4-hydroxyproline; partial modification. Cystine bridges form between Cys-38–Cys-99, Cys-50–Cys-112, and Cys-98–Cys-103. Glu-41 is subject to 4-carboxyglutamate. At His-51 the chain carries Histidine amide. The propeptide at 52–92 (GKRNDAGKKRGRASPLWQRQGFLSMLKAKRNEAFFLQRDGR) is c peptide. Residue Glu-96 is modified to 4-carboxyglutamate. At Pro-102 the chain carries 4-hydroxyproline; partial.

It belongs to the insulin family. Heterodimer of A and B chains; disulfide-linked. Post-translationally, it is noteworthy that in this dimer, in contrast to Con-Ins G1, the chain B is amidated and not the chain A. In terms of tissue distribution, expressed by the venom gland.

It is found in the secreted. Its function is as follows. This venom insulin, from a fish-hunting cone snail, facilitates prey capture by rapidly inducing hypoglycemic shock. It is one of the smallest known insulin found in nature and lacks the C-terminal segment of the B chain that, in human insulin, mediates engagement of the insulin receptor (INSR) and assembly of the hormone's hexameric storage form. Despite lacking this segment, it both binds and activates human insulin receptor (long isoform (HIR-B)) with only a 10-fold lower potency. In vivo, intraperitoneal injection of this peptide into zebrafish lowers blood glucose with the same potency than human insulin. In addition, when applied to water, this peptide reduces overall locomotor activity of zebrafish larvae, observed as a significant decrease in the percentage of time spent swimming and movement frequency. The sequence is that of Con-Ins G3b from Conus geographus (Geography cone).